We begin with the raw amino-acid sequence, 89 residues long: Co-chaperonin GroES (89 aa).

Belongs to the GroES chaperonin family. In terms of assembly, heptamer of 7 subunits arranged in a ring. Interacts with the chaperonin GroEL.

Its subcellular location is the cytoplasm. Functionally, together with the chaperonin GroEL, plays an essential role in assisting protein folding. The GroEL-GroES system forms a nano-cage that allows encapsulation of the non-native substrate proteins and provides a physical environment optimized to promote and accelerate protein folding. GroES binds to the apical surface of the GroEL ring, thereby capping the opening of the GroEL channel. The protein is Co-chaperonin GroES of Kosmotoga olearia (strain ATCC BAA-1733 / DSM 21960 / TBF 19.5.1).